Here is a 593-residue protein sequence, read N- to C-terminus: Metal-response element-binding transcription factor 2 (593 aa).

The disordered stretch occupies residues 1–35 (MRDSTGAGNSLVHKRSPLRRNQKTPTSLTKLSLQD). Basic residues predominate over residues 12–22 (VHKRSPLRRNQ). Positions 23–32 (KTPTSLTKLS) are enriched in polar residues. A Phosphothreonine modification is found at Thr-24. Residues 44-101 (CKFEEGQDVLARWSDGLFYLGTIKKINILKQSCFIIFEDSSKSWVLWKDIQTGATGSG) enclose the Tudor domain. PHD-type zinc fingers lie at residues 102–157 (EMVC…CVFA) and 201–255 (QCYC…CSSG). Residue Lys-360 forms a Glycyl lysine isopeptide (Lys-Gly) (interchain with G-Cter in SUMO2) linkage. The segment covering 360–374 (KAEKEPEGTSHEFKI) has biased composition (basic and acidic residues). Disordered stretches follow at residues 360–411 (KAEK…PYTR) and 424–486 (KESI…TRTG). Polar residues predominate over residues 445–454 (TAHSSNTSDV). Residue Ser-452 is modified to Phosphoserine. Positions 459 to 471 (ASSAKETTSSSIS) are enriched in low complexity. A Glycyl lysine isopeptide (Lys-Gly) (interchain with G-Cter in SUMO2) cross-link involves residue Lys-522.

This sequence belongs to the Polycomblike family. Associates with the PRC2 complex, which consists of the core components EED, EZH1 or EZH2, SUZ12, and RBBP4, and various combinations of accessory subunits including AEBP2, JARID2, PHF19, MTF2 and EPOP. Forms a dimeric PRC2.1 (class 1, PRC-PCL) complex consisting of at least SUZ12, RBBP4, and PHF19 or MTF2; PHF19 and MTF2 stabilize the dimeric structure which enhances PRC2 interaction with chromatin.

Its subcellular location is the nucleus. In terms of biological role, polycomb group (PcG) protein that specifically binds histone H3 trimethylated at 'Lys-36' (H3K36me3) and recruits the PRC2 complex, thus enhancing PRC2 H3K27me3 methylation activity. Regulates the transcriptional networks during embryonic stem cell self-renewal and differentiation. Promotes recruitment of the PRC2 complex to the inactive X chromosome in differentiating XX ES cells and PRC2 recruitment to target genes in undifferentiated ES cells. Required to repress Hox genes by enhancing H3K27me3 methylation of the PRC2 complex. In some conditions may act as an inhibitor of PRC2 activity: able to activate the CDKN2A gene and promote cellular senescence by suppressing the catalytic activity of the PRC2 complex locally. Binds to the metal-regulating-element (MRE) of MT1A gene promoter. This chain is Metal-response element-binding transcription factor 2 (MTF2), found in Homo sapiens (Human).